Consider the following 93-residue polypeptide: Pyrimidine/purine nucleoside phosphorylase (93 aa).

The protein belongs to the nucleoside phosphorylase PpnP family.

The catalysed reaction is a purine D-ribonucleoside + phosphate = a purine nucleobase + alpha-D-ribose 1-phosphate. It carries out the reaction adenosine + phosphate = alpha-D-ribose 1-phosphate + adenine. The enzyme catalyses cytidine + phosphate = cytosine + alpha-D-ribose 1-phosphate. It catalyses the reaction guanosine + phosphate = alpha-D-ribose 1-phosphate + guanine. The catalysed reaction is inosine + phosphate = alpha-D-ribose 1-phosphate + hypoxanthine. It carries out the reaction thymidine + phosphate = 2-deoxy-alpha-D-ribose 1-phosphate + thymine. The enzyme catalyses uridine + phosphate = alpha-D-ribose 1-phosphate + uracil. It catalyses the reaction xanthosine + phosphate = alpha-D-ribose 1-phosphate + xanthine. In terms of biological role, catalyzes the phosphorolysis of diverse nucleosides, yielding D-ribose 1-phosphate and the respective free bases. Can use uridine, adenosine, guanosine, cytidine, thymidine, inosine and xanthosine as substrates. Also catalyzes the reverse reactions. This chain is Pyrimidine/purine nucleoside phosphorylase, found in Pseudomonas syringae pv. syringae (strain B728a).